We begin with the raw amino-acid sequence, 94 residues long: Co-chaperonin GroES (94 aa).

This sequence belongs to the GroES chaperonin family. Heptamer of 7 subunits arranged in a ring. Interacts with the chaperonin GroEL.

It is found in the cytoplasm. Its function is as follows. Together with the chaperonin GroEL, plays an essential role in assisting protein folding. The GroEL-GroES system forms a nano-cage that allows encapsulation of the non-native substrate proteins and provides a physical environment optimized to promote and accelerate protein folding. GroES binds to the apical surface of the GroEL ring, thereby capping the opening of the GroEL channel. In Staphylococcus aureus (strain Mu50 / ATCC 700699), this protein is Co-chaperonin GroES.